The following is a 242-amino-acid chain: Small ribosomal subunit protein uS3 (242 aa).

The 71-residue stretch at Ile-39–Thr-109 folds into the KH type-2 domain. A disordered region spans residues Lys-220–Gly-242. Positions Gln-223–Arg-232 are enriched in basic residues. Residues Gln-233 to Gly-242 show a composition bias toward basic and acidic residues.

It belongs to the universal ribosomal protein uS3 family. Part of the 30S ribosomal subunit. Forms a tight complex with proteins S10 and S14.

Its function is as follows. Binds the lower part of the 30S subunit head. Binds mRNA in the 70S ribosome, positioning it for translation. This Trichodesmium erythraeum (strain IMS101) protein is Small ribosomal subunit protein uS3.